The following is a 301-amino-acid chain: Heme A synthase (301 aa).

Residues 1–5 lie on the Cytoplasmic side of the membrane; that stretch reads MHKKL. A helical transmembrane segment spans residues 6–26; sequence AFFSGFVTLGMMLVLIMGGTV. At 27–62 the chain is on the extracellular side; sequence TKTDSGDGCGTDWPLCHGKLIPTNPSVETMIEYSHR. A disulfide bond links C35 and C42. E58 is an active-site residue. H61 provides a ligand contact to heme o. A helical membrane pass occupies residues 63–83; it reads VVSGIEGLLIIALAIWTFIAV. The Cytoplasmic segment spans residues 84–90; sequence KHRVDVK. Residues 91 to 111 form a helical membrane-spanning segment; that stretch reads IFAFLAFIFMLIQSIIGAGAV. Residues 112–121 lie on the Extracellular side of the membrane; sequence IWQQSDAILA. Residues 122–142 traverse the membrane as a helical segment; that stretch reads LHFGISLVSFASLLILTILLF. H123 contributes to the heme o binding site. Residues 143 to 158 lie on the Cytoplasmic side of the membrane; it reads EGDREHQVVSRRLRSH. A helical transmembrane segment spans residues 159–179; that stretch reads LYGLSIYTMIVVYTGAYVRHL. The Extracellular segment spans residues 180 to 203; it reads GATYACVGWPICEQEVWTFESYVQ. Cysteines 185 and 191 form a disulfide. Residues 204–224 traverse the membrane as a helical segment; that stretch reads MGHRVMAGLLVLYTLYVLYLA. Heme b is bound at residue H206. The Cytoplasmic segment spans residues 225-234; the sequence is RKEMNRLIER. Residues 235–255 traverse the membrane as a helical segment; sequence GMMASLFFILLQVGTGAWIVL. The Extracellular segment spans residues 256 to 259; that stretch reads GGHA. Residues 260 to 280 traverse the membrane as a helical segment; it reads TYVPLLHAFLITCYFGILSYL. H266 serves as a coordination point for heme b. The Cytoplasmic portion of the chain corresponds to 281 to 301; it reads SYHAYRSTARQDGAQLKNMNG.

This sequence belongs to the COX15/CtaA family. Type 1 subfamily. As to quaternary structure, interacts with CtaB. Heme b serves as cofactor.

It localises to the cell membrane. The catalysed reaction is Fe(II)-heme o + 2 A + H2O = Fe(II)-heme a + 2 AH2. The protein operates within porphyrin-containing compound metabolism; heme A biosynthesis; heme A from heme O: step 1/1. In terms of biological role, catalyzes the conversion of heme O to heme A by two successive hydroxylations of the methyl group at C8. The first hydroxylation forms heme I, the second hydroxylation results in an unstable dihydroxymethyl group, which spontaneously dehydrates, resulting in the formyl group of heme A. The protein is Heme A synthase of Exiguobacterium sp. (strain ATCC BAA-1283 / AT1b).